Consider the following 394-residue polypeptide: Elongation factor Tu (394 aa).

The tr-type G domain occupies 10–204 (LPHVNIGTIG…AVDEYIPTPT (195 aa)). The segment at 19 to 26 (GHVDHGKT) is G1. 19–26 (GHVDHGKT) lines the GTP pocket. Position 26 (Thr26) interacts with Mg(2+). The tract at residues 60-64 (GITIN) is G2. A G3 region spans residues 81–84 (DCPG). GTP contacts are provided by residues 81–85 (DCPGH) and 136–139 (NKCD). Residues 136 to 139 (NKCD) are G4. A G5 region spans residues 174–176 (SAL).

The protein belongs to the TRAFAC class translation factor GTPase superfamily. Classic translation factor GTPase family. EF-Tu/EF-1A subfamily. As to quaternary structure, monomer.

It localises to the cytoplasm. It carries out the reaction GTP + H2O = GDP + phosphate + H(+). In terms of biological role, GTP hydrolase that promotes the GTP-dependent binding of aminoacyl-tRNA to the A-site of ribosomes during protein biosynthesis. The protein is Elongation factor Tu of Mesoplasma florum (strain ATCC 33453 / NBRC 100688 / NCTC 11704 / L1) (Acholeplasma florum).